The chain runs to 190 residues: Peptide methionine sulfoxide reductase MsrA (190 aa).

Residue cysteine 21 is part of the active site.

Belongs to the MsrA Met sulfoxide reductase family.

It catalyses the reaction L-methionyl-[protein] + [thioredoxin]-disulfide + H2O = L-methionyl-(S)-S-oxide-[protein] + [thioredoxin]-dithiol. It carries out the reaction [thioredoxin]-disulfide + L-methionine + H2O = L-methionine (S)-S-oxide + [thioredoxin]-dithiol. In terms of biological role, has an important function as a repair enzyme for proteins that have been inactivated by oxidation. Catalyzes the reversible oxidation-reduction of methionine sulfoxide in proteins to methionine. The protein is Peptide methionine sulfoxide reductase MsrA of Polynucleobacter asymbioticus (strain DSM 18221 / CIP 109841 / QLW-P1DMWA-1) (Polynucleobacter necessarius subsp. asymbioticus).